We begin with the raw amino-acid sequence, 225 residues long: 7-cyano-7-deazaguanine synthase (225 aa).

10 to 20 (FSGGQDSTTLA) serves as a coordination point for ATP. The Zn(2+) site is built by C190, C205, C208, and C211.

The protein belongs to the QueC family. Requires Zn(2+) as cofactor.

The catalysed reaction is 7-carboxy-7-deazaguanine + NH4(+) + ATP = 7-cyano-7-deazaguanine + ADP + phosphate + H2O + H(+). It participates in purine metabolism; 7-cyano-7-deazaguanine biosynthesis. In terms of biological role, catalyzes the ATP-dependent conversion of 7-carboxy-7-deazaguanine (CDG) to 7-cyano-7-deazaguanine (preQ(0)). The sequence is that of 7-cyano-7-deazaguanine synthase from Helicobacter acinonychis (strain Sheeba).